Here is a 701-residue protein sequence, read N- to C-terminus: Sulfate anion transporter 1 (701 aa).

Residues 1 to 20 are disordered; it reads MDESPEPLQQGRGPVPVRRQ. Transmembrane regions (helical) follow at residues 68–90 and 94–116; these read YLAG…AIAY and AGLQ…FLMG. N-linked (GlcNAc...) asparagine glycosylation is found at N158 and N163. 7 consecutive transmembrane segments (helical) span residues 176–198, 255–277, 290–309, 342–364, 377–399, 412–434, and 472–494; these read YAIR…MGVL, GAGQ…LLAA, VPLP…SHFG, ALDA…EMFA, LLAV…SAAL, TQLS…APLF, and LVWA…LAGV. The STAS domain occupies 527 to 687; the sequence is EFEGLVPEPG…LSVHDAVQTA (161 aa).

It belongs to the SLC26A/SulP transporter (TC 2.A.53) family. In terms of tissue distribution, expressed most abundantly in the kidney and liver, with lower levels in the pancreas, testis, brain, small intestine, colon, and lung.

It is found in the cell membrane. The protein resides in the basolateral cell membrane. It catalyses the reaction thiosulfate(in) + sulfate(out) = thiosulfate(out) + sulfate(in). The enzyme catalyses 2 hydrogencarbonate(out) + sulfate(in) = 2 hydrogencarbonate(in) + sulfate(out). The catalysed reaction is oxalate(in) + sulfate(out) = oxalate(out) + sulfate(in). It carries out the reaction oxalate(in) + 2 hydrogencarbonate(out) = oxalate(out) + 2 hydrogencarbonate(in). Its function is as follows. Sodium-independent sulfate anion transporter. Can transport other anions including bicarbonate, thiosulfate and oxalate by mediating sulfate-thiosulfate, sulfate-hydrogencarbonate and sulfate-oxalate anion exchange. Mediates oxalate-hydrogencarbonate anion exchange. This chain is Sulfate anion transporter 1 (SLC26A1), found in Homo sapiens (Human).